Consider the following 915-residue polypeptide: Bifunctional uridylyltransferase/uridylyl-removing enzyme (915 aa).

The segment at 1 to 360 is uridylyltransferase; sequence MFNCAVTAID…PDEERPKKQP (360 aa). A uridylyl-removing region spans residues 361–731; it reads INARFNQVGE…EHRELALDAV (371 aa). The HD domain maps to 478 to 594; it reads VDAHTLFLIR…TLFADLVGNV (117 aa). ACT domains lie at 732–817 and 840–915; these read QVFV…RIPR and IMSL…NDSI.

The protein belongs to the GlnD family. Mg(2+) is required as a cofactor.

It carries out the reaction [protein-PII]-L-tyrosine + UTP = [protein-PII]-uridylyl-L-tyrosine + diphosphate. It catalyses the reaction [protein-PII]-uridylyl-L-tyrosine + H2O = [protein-PII]-L-tyrosine + UMP + H(+). Its activity is regulated as follows. Uridylyltransferase (UTase) activity is inhibited by glutamine, while glutamine activates uridylyl-removing (UR) activity. Modifies, by uridylylation and deuridylylation, the PII regulatory proteins (GlnB and homologs), in response to the nitrogen status of the cell that GlnD senses through the glutamine level. Under low glutamine levels, catalyzes the conversion of the PII proteins and UTP to PII-UMP and PPi, while under higher glutamine levels, GlnD hydrolyzes PII-UMP to PII and UMP (deuridylylation). Thus, controls uridylylation state and activity of the PII proteins, and plays an important role in the regulation of nitrogen assimilation and metabolism. In Psychrobacter arcticus (strain DSM 17307 / VKM B-2377 / 273-4), this protein is Bifunctional uridylyltransferase/uridylyl-removing enzyme.